A 205-amino-acid chain; its full sequence is Small ribosomal subunit protein uS4 (205 aa).

A disordered region spans residues 19 to 45 (IWGRPKSPVNRREYGPGQHGQRRKGKL). One can recognise an S4 RNA-binding domain in the interval 94-157 (SRLDAVVYRA…KQLAIVLEAV (64 aa)).

Belongs to the universal ribosomal protein uS4 family. In terms of assembly, part of the 30S ribosomal subunit. Contacts protein S5. The interaction surface between S4 and S5 is involved in control of translational fidelity.

One of the primary rRNA binding proteins, it binds directly to 16S rRNA where it nucleates assembly of the body of the 30S subunit. In terms of biological role, with S5 and S12 plays an important role in translational accuracy. The polypeptide is Small ribosomal subunit protein uS4 (Brucella melitensis biotype 2 (strain ATCC 23457)).